The sequence spans 246 residues: MTQTFADQKRKTVETAEFTEDGRYKRKVRSFVLRTGRLSEFQKNMMNDNWGTLGLDYQTEPFDFAKIYGNDNPVVLEIGFGMGKSLVDMAFANPDKNYLGIEVHTPGVGACIAYAVEKGGTNLRVICHDATEILRDSIADGALGGLQLFFPDPWHKAKHHKRRIVQPHFVAQVVQKLAGNGFIHMATDWENYAEQMLEVLSANTDLVNTSKNGDYIPRPDFRPLTKFEARGHRLGHGVWDLYFVKK.

S-adenosyl-L-methionine is bound by residues E77, E102, D129, and D152. D152 is an active-site residue. Residues K156, D188, and 225-228 (TKFE) contribute to the substrate site.

This sequence belongs to the class I-like SAM-binding methyltransferase superfamily. TrmB family.

The enzyme catalyses guanosine(46) in tRNA + S-adenosyl-L-methionine = N(7)-methylguanosine(46) in tRNA + S-adenosyl-L-homocysteine. Its pathway is tRNA modification; N(7)-methylguanine-tRNA biosynthesis. Catalyzes the formation of N(7)-methylguanine at position 46 (m7G46) in tRNA. The sequence is that of tRNA (guanine-N(7)-)-methyltransferase from Haemophilus influenzae (strain PittEE).